The primary structure comprises 59 residues: uncharacterized protein (59 aa).

This is an uncharacterized protein from Acheta domesticus (House cricket).